Consider the following 172-residue polypeptide: RNA pyrophosphohydrolase (172 aa).

Positions Gly-6 to Lys-149 constitute a Nudix hydrolase domain. Residues Gly-38–Gly-59 carry the Nudix box motif.

This sequence belongs to the Nudix hydrolase family. RppH subfamily. It depends on a divalent metal cation as a cofactor.

Functionally, accelerates the degradation of transcripts by removing pyrophosphate from the 5'-end of triphosphorylated RNA, leading to a more labile monophosphorylated state that can stimulate subsequent ribonuclease cleavage. This is RNA pyrophosphohydrolase from Vibrio cholerae serotype O1 (strain ATCC 39315 / El Tor Inaba N16961).